The chain runs to 264 residues: Ion-translocating oxidoreductase complex subunit B (264 aa).

A helical transmembrane segment spans residues 5 to 25; it reads LINSIAVLAGLGFAVGVMLVI. Positions 33–92 constitute a 4Fe-4S domain; the sequence is DSNPLIDDVASLLPGANCGGCGFAGCAACAEAIVEQGAPVNSCPVGGFEVAKQIGALLGQ. The [4Fe-4S] cluster site is built by Cys-50, Cys-53, Cys-58, Cys-75, Cys-138, Cys-142, Cys-148, Cys-152, Cys-172, Cys-175, Cys-178, Cys-182, Cys-217, Cys-220, Cys-223, Cys-227, Cys-246, Cys-249, Cys-252, and Cys-256. 4 consecutive 4Fe-4S ferredoxin-type domains span residues 127–162, 163–192, 207–236, and 237–264; these read VALM…MGED, GFPV…FARD, KDVK…RVTE, and FLAE…IELR.

Belongs to the 4Fe4S bacterial-type ferredoxin family. RnfB subfamily. As to quaternary structure, the Rnf complex is probably composed of eight subunits, including RnfA, RnfB, RnfC, RnfD, RnfE and RnfG. The cofactor is [4Fe-4S] cluster.

It localises to the cell membrane. Functionally, part of a membrane-bound complex that couples electron transfer with translocation of ions across the membrane. Catalyzes Na(+) transport, most probably coupled to electron transfer from reduced ferredoxin to methanophenazine and heterodisulfide reductase. Involved in heterodisulfide reduction during methanogenesis from acetate. In Methanosarcina acetivorans (strain ATCC 35395 / DSM 2834 / JCM 12185 / C2A), this protein is Ion-translocating oxidoreductase complex subunit B.